Reading from the N-terminus, the 258-residue chain is Granzyme A (258 aa).

A signal peptide spans 1–26; sequence MNIPFPFSFPPAICLLLIPGVFPVSC. Positions 27–28 are cleaved as a propeptide — activation peptide; that stretch reads EG. A Peptidase S1 domain is found at 29–255; the sequence is IIGGNEVAPH…HLNWIKKTIA (227 aa). Cysteine 52 and cysteine 68 are disulfide-bonded. Catalysis depends on charge relay system residues histidine 67 and aspartate 112. Disulfide bonds link cysteine 146-cysteine 217, cysteine 178-cysteine 196, and cysteine 207-cysteine 230. Asparagine 169 carries N-linked (GlcNAc...) asparagine glycosylation. Serine 211 (charge relay system) is an active-site residue.

It belongs to the peptidase S1 family. Granzyme subfamily. In terms of assembly, homodimer; disulfide-linked. Interacts with APEX1.

Its subcellular location is the secreted. It localises to the cytoplasmic granule. It carries out the reaction Hydrolysis of proteins, including fibronectin, type IV collagen and nucleolin. Preferential cleavage: -Arg-|-Xaa-, -Lys-|-Xaa- &gt;&gt; -Phe-|-Xaa- in small molecule substrates.. Its function is as follows. Abundant protease in the cytosolic granules of cytotoxic T-cells and NK-cells which activates caspase-independent pyroptosis when delivered into the target cell through the immunological synapse. It cleaves after Lys or Arg. Cleaves APEX1 after 'Lys-31' and destroys its oxidative repair activity. Cleaves the nucleosome assembly protein SET after 'Lys-189', which disrupts its nucleosome assembly activity and allows the SET complex to translocate into the nucleus to nick and degrade the DNA. The protein is Granzyme A (GZMA) of Bos taurus (Bovine).